Here is a 123-residue protein sequence, read N- to C-terminus: Small ribosomal subunit protein uS13 (123 aa).

The tract at residues 95–123 is disordered; sequence GLPVRGQKTKTNARTRKGPKKAVASKKKK.

The protein belongs to the universal ribosomal protein uS13 family. Part of the 30S ribosomal subunit. Forms a loose heterodimer with protein S19. Forms two bridges to the 50S subunit in the 70S ribosome.

Its function is as follows. Located at the top of the head of the 30S subunit, it contacts several helices of the 16S rRNA. In the 70S ribosome it contacts the 23S rRNA (bridge B1a) and protein L5 of the 50S subunit (bridge B1b), connecting the 2 subunits; these bridges are implicated in subunit movement. Contacts the tRNAs in the A and P-sites. This Clostridium acetobutylicum (strain ATCC 824 / DSM 792 / JCM 1419 / IAM 19013 / LMG 5710 / NBRC 13948 / NRRL B-527 / VKM B-1787 / 2291 / W) protein is Small ribosomal subunit protein uS13.